The primary structure comprises 402 residues: Putative nickel insertion protein (402 aa).

It belongs to the LarC family.

This chain is Putative nickel insertion protein, found in Synechococcus elongatus (strain ATCC 33912 / PCC 7942 / FACHB-805) (Anacystis nidulans R2).